Here is a 368-residue protein sequence, read N- to C-terminus: Putative agmatine deiminase (368 aa).

The active-site Amidino-cysteine intermediate is the Cys359.

Belongs to the agmatine deiminase family.

The catalysed reaction is agmatine + H2O = N-carbamoylputrescine + NH4(+). The chain is Putative agmatine deiminase from Pectobacterium atrosepticum (strain SCRI 1043 / ATCC BAA-672) (Erwinia carotovora subsp. atroseptica).